Consider the following 45-residue polypeptide: MSKRTYQPNKRKRLKTHGFRSRMSTASGRRIISCRRRKNRETLTA.

The span at 1-20 (MSKRTYQPNKRKRLKTHGFR) shows a compositional bias: basic residues. A disordered region spans residues 1 to 45 (MSKRTYQPNKRKRLKTHGFRSRMSTASGRRIISCRRRKNRETLTA).

It belongs to the bacterial ribosomal protein bL34 family.

The sequence is that of Large ribosomal subunit protein bL34 from Tropheryma whipplei (strain Twist) (Whipple's bacillus).